The chain runs to 445 residues: Argininosuccinate synthase (445 aa).

ATP is bound by residues 17–25 and Ala-43; that span reads AFSGGLDTS. Residue Tyr-99 coordinates L-citrulline. ATP is bound by residues Gly-129 and Thr-131. L-aspartate contacts are provided by Thr-131, Asn-135, and Asp-136. Residue Asn-135 participates in L-citrulline binding. Residue Asp-136 participates in ATP binding. L-citrulline contacts are provided by Arg-139 and Ser-192. Residue Asp-194 participates in ATP binding. L-citrulline contacts are provided by Thr-201, Glu-203, and Glu-280.

It belongs to the argininosuccinate synthase family. Type 2 subfamily. Homotetramer.

The protein localises to the cytoplasm. The enzyme catalyses L-citrulline + L-aspartate + ATP = 2-(N(omega)-L-arginino)succinate + AMP + diphosphate + H(+). Its pathway is amino-acid biosynthesis; L-arginine biosynthesis; L-arginine from L-ornithine and carbamoyl phosphate: step 2/3. This Burkholderia multivorans (strain ATCC 17616 / 249) protein is Argininosuccinate synthase (argG).